The following is a 330-amino-acid chain: BTB/POZ domain-containing adapter for CUL3-mediated RhoA degradation protein 1 (330 aa).

Positions 1–34 are disordered; that stretch reads MSAEASGSSGGHAVTVSGSSPSSSSHVGEEKPGR. The 69-residue stretch at 40–108 folds into the BTB domain; the sequence is KYVKLNVGGT…LRDGTVPLPD (69 aa). A compositionally biased stretch (low complexity) spans 282 to 291; sequence GGVSSSGAGQ. A disordered region spans residues 282–304; it reads GGVSSSGAGQSEEEGAGAGGGDR.

The protein belongs to the BACURD family.

The protein resides in the nucleus. Its function is as follows. Substrate-specific adapter of a BCR (BTB-CUL3-RBX1) E3 ubiquitin-protein ligase complex required for synaptic transmission. The BCR(KCTD13) E3 ubiquitin ligase complex mediates the ubiquitination of RHOA, leading to its degradation by the proteasome, thereby regulating the actin cytoskeleton and promoting synaptic transmission. This Danio rerio (Zebrafish) protein is BTB/POZ domain-containing adapter for CUL3-mediated RhoA degradation protein 1.